A 129-amino-acid polypeptide reads, in one-letter code: Sulfurtransferase TusD (129 aa).

Cys79 serves as the catalytic Cysteine persulfide intermediate.

It belongs to the DsrE/TusD family. As to quaternary structure, heterohexamer, formed by a dimer of trimers. The hexameric TusBCD complex contains 2 copies each of TusB, TusC and TusD. The TusBCD complex interacts with TusE.

It localises to the cytoplasm. Functionally, part of a sulfur-relay system required for 2-thiolation of 5-methylaminomethyl-2-thiouridine (mnm(5)s(2)U) at tRNA wobble positions. Accepts sulfur from TusA and transfers it in turn to TusE. This Pectobacterium carotovorum subsp. carotovorum (strain PC1) protein is Sulfurtransferase TusD.